Reading from the N-terminus, the 525-residue chain is MQKTSMNPVTDPVAAATGRVAIRQLPIKTQPNSQSLTPFLQLPPKPPPNLLFSSPLASVELRHRARARRRRRPSHPRRAPAMRMGKYEMGRALGEGHFGKVKLARHADTGAAFAIKILDRQRILAMKIDEQIKREIATLKLLKHPNVVRLHEVSASKTKIYMVLEYVNGGELFDKIALKGKLSEKEGRKLFQQLMDAVSYCHEKGVYHRDLKPENVLVDAKGNIKVSDFGLSALPQNQRKDGLLHTTCGSPNYIAPEVLLNRGYDGSLSDIWSCGVILYVMLTGNLPFDDQNTVVLYQKILKGDARIPKWLSPGAQDILRKILDPNPITRLDITGIRAHEWFRQDYTPAMPFDDDDDNNISDGNLHMTENQDIETSPAISQINAFQLIGMSSCLDLSGFFEKEDVSERKIRFVSNYSPTSLFEKIESTVTEKGFQVQKNSGKLKVIQVCKEPANPRGHGNLLISAEVFEINESLYVVELKRSSGDCSLYRQLCASLSEDLGICKRQQLLKKDSMRQDLCRYNSSF.

The 256-residue stretch at 87 to 342 folds into the Protein kinase domain; the sequence is YEMGRALGEG…ITGIRAHEWF (256 aa). Residues 93–101 and K116 each bind ATP; that span reads LGEGHFGKV. Catalysis depends on D210, which acts as the Proton acceptor. An activation loop region spans residues 228–257; that stretch reads DFGLSALPQNQRKDGLLHTTCGSPNYIAPE. In terms of domain architecture, NAF spans 372–401; sequence DIETSPAISQINAFQLIGMSSCLDLSGFFE. The tract at residues 407–436 is PPI; sequence ERKIRFVSNYSPTSLFEKIESTVTEKGFQV.

It belongs to the protein kinase superfamily. CAMK Ser/Thr protein kinase family. SNF1 subfamily. Requires Mn(2+) as cofactor.

The enzyme catalyses L-seryl-[protein] + ATP = O-phospho-L-seryl-[protein] + ADP + H(+). It catalyses the reaction L-threonyl-[protein] + ATP = O-phospho-L-threonyl-[protein] + ADP + H(+). Functionally, CIPK serine-threonine protein kinases interact with CBL proteins. Binding of a CBL protein to the regulatory NAF domain of CIPK protein lead to the activation of the kinase in a calcium-dependent manner. The sequence is that of CBL-interacting protein kinase 21 (CIPK21) from Oryza sativa subsp. japonica (Rice).